We begin with the raw amino-acid sequence, 65 residues long: Alpha-toxin BeM10 (65 aa).

In terms of domain architecture, LCN-type CS-alpha/beta spans 2 to 65 (RDGYIADDKD…IKQKVSGKCN (64 aa)). Intrachain disulfides connect C12–C64, C16–C35, C22–C45, and C26–C47.

It belongs to the long (4 C-C) scorpion toxin superfamily. Sodium channel inhibitor family. Alpha subfamily. As to expression, expressed by the venom gland.

Its subcellular location is the secreted. In terms of biological role, alpha toxins bind voltage-independently at site-3 of sodium channels (Nav) and inhibit the inactivation of the activated channels, thereby blocking neuronal transmission. Has paralytic activity in mice. The protein is Alpha-toxin BeM10 of Mesobuthus eupeus (Lesser Asian scorpion).